The chain runs to 511 residues: Coiled-coil domain-containing protein 125 (511 aa).

Positions 1 to 12 (MSKVARSSSESD) are enriched in polar residues. The tract at residues 1-110 (MSKVARSSSE…TVDSNSELSN (110 aa)) is disordered. The segment covering 43–54 (EFSHRSRKRSDG) has biased composition (basic and acidic residues). Positions 83-108 (QDTFPQVSRISNYRRQSSTVDSNSEL) are enriched in polar residues. 2 coiled-coil regions span residues 105–243 (NSEL…LEAL) and 293–325 (RMAASTRKLLLQLKQELEILQKSKEEAYVMADA). S504 carries the phosphoserine modification.

Its subcellular location is the cytoplasm. Its function is as follows. May be involved in the regulation of cell migration. The sequence is that of Coiled-coil domain-containing protein 125 (CCDC125) from Homo sapiens (Human).